The sequence spans 212 residues: ATP-dependent dethiobiotin synthetase BioD (212 aa).

Glycine 13–valine 18 contacts ATP. Threonine 17 contributes to the Mg(2+) binding site. The active site involves lysine 33. Residue serine 37 participates in substrate binding. Glutamate 100 is a binding site for Mg(2+). ATP contacts are provided by residues glutamate 100 to glycine 103, isoleucine 160 to serine 161, and proline 184 to leucine 186.

It belongs to the dethiobiotin synthetase family. In terms of assembly, homodimer. It depends on Mg(2+) as a cofactor.

The protein localises to the cytoplasm. It carries out the reaction (7R,8S)-7,8-diammoniononanoate + CO2 + ATP = (4R,5S)-dethiobiotin + ADP + phosphate + 3 H(+). It participates in cofactor biosynthesis; biotin biosynthesis; biotin from 7,8-diaminononanoate: step 1/2. In terms of biological role, catalyzes a mechanistically unusual reaction, the ATP-dependent insertion of CO2 between the N7 and N8 nitrogen atoms of 7,8-diaminopelargonic acid (DAPA, also called 7,8-diammoniononanoate) to form a ureido ring. The protein is ATP-dependent dethiobiotin synthetase BioD of Brucella abortus (strain S19).